Here is a 335-residue protein sequence, read N- to C-terminus: Glucan endo-1,3-beta-glucosidase, acidic isoform (335 aa).

Positions 1–29 (MARQGVIASMHALALLLGAFAAIPTGVQS) are cleaved as a signal peptide. Residue glutamate 122 is the Proton donor of the active site. Glutamate 259 serves as the catalytic Nucleophile.

It belongs to the glycosyl hydrolase 17 family. In terms of tissue distribution, accumulates in aleurone layers. Much lower levels are found in the embryo, and none in starchy endosperm.

It is found in the secreted. Its subcellular location is the extracellular space. It catalyses the reaction Hydrolysis of (1-&gt;3)-beta-D-glucosidic linkages in (1-&gt;3)-beta-D-glucans.. Is thought to be an important plant defense-related product against fungal pathogens. The protein is Glucan endo-1,3-beta-glucosidase, acidic isoform of Zea mays (Maize).